The chain runs to 91 residues: UPF0223 protein SAR1071 (91 aa).

This sequence belongs to the UPF0223 family.

The sequence is that of UPF0223 protein SAR1071 from Staphylococcus aureus (strain MRSA252).